Consider the following 325-residue polypeptide: Pectinesterase A (325 aa).

An N-terminal signal peptide occupies residues 1 to 18; it reads MRVQSYLSLFSLVGAALC. The N-linked (GlcNAc...) asparagine glycan is linked to N126. Q143 is a binding site for substrate. D166 acts as the Proton donor in catalysis. D187 functions as the Nucleophile in the catalytic mechanism. The substrate site is built by R247 and W249.

It belongs to the pectinesterase family.

Its subcellular location is the secreted. The enzyme catalyses [(1-&gt;4)-alpha-D-galacturonosyl methyl ester](n) + n H2O = [(1-&gt;4)-alpha-D-galacturonosyl](n) + n methanol + n H(+). It participates in glycan metabolism; pectin degradation; 2-dehydro-3-deoxy-D-gluconate from pectin: step 1/5. In terms of biological role, involved in maceration and soft-rotting of plant tissue. Active against citrus pectin. This is Pectinesterase A (pmeA) from Emericella nidulans (strain FGSC A4 / ATCC 38163 / CBS 112.46 / NRRL 194 / M139) (Aspergillus nidulans).